The sequence spans 138 residues: Cysteine desulfuration protein SufE (138 aa).

Residue Cys51 is the Cysteine persulfide intermediate of the active site.

It belongs to the SufE family. In terms of assembly, homodimer. Interacts with SufS.

It localises to the cytoplasm. It functions in the pathway cofactor biosynthesis; iron-sulfur cluster biosynthesis. Its function is as follows. Participates in cysteine desulfuration mediated by SufS. Cysteine desulfuration mobilizes sulfur from L-cysteine to yield L-alanine and constitutes an essential step in sulfur metabolism for biosynthesis of a variety of sulfur-containing biomolecules. Functions as a sulfur acceptor for SufS, by mediating the direct transfer of the sulfur atom from the S-sulfanylcysteine of SufS, an intermediate product of cysteine desulfuration process. This chain is Cysteine desulfuration protein SufE, found in Cronobacter sakazakii (strain ATCC BAA-894) (Enterobacter sakazakii).